Consider the following 232-residue polypeptide: Exosome complex component RRP40 (232 aa).

The protein belongs to the RRP40 family. In terms of assembly, component of the RNA exosome complex. Specifically part of the catalytically inactive RNA exosome core complex.

It is found in the cytoplasm. The protein resides in the nucleus. Its subcellular location is the nucleolus. Its function is as follows. Non-catalytic component of the RNA exosome complex which has 3'-&gt;5' exoribonuclease activity and participates in a multitude of cellular RNA processing and degradation events. In the nucleus, the RNA exosome complex is involved in proper maturation of stable RNA species such as rRNA, snRNA and snoRNA, in the elimination of RNA processing by-products and non-coding 'pervasive' transcripts such as antisense RNA species, and of mRNAs with processing defects, thereby limiting or excluding their export to the cytoplasm. In the cytoplasm, the RNA exosome complex is involved in general mRNA turnover and specifically degrades inherently unstable mRNAs containing AU-rich elements (AREs) within their 3' untranslated regions, and in RNA surveillance pathways, preventing translation of aberrant mRNAs. The catalytic inactive RNA exosome core complex of 9 subunits is proposed to play a pivotal role in the binding and presentation of RNA for ribonucleolysis, and to serve as a scaffold for the association with catalytic subunits and accessory proteins or complexes. Required generally for normal embryonic and neuronal development. Also plays a critical role in the maintenance of neuronal function in mature flies by controlling the levels of specific mRNAs such as the synaptic regulator Arc1. This Drosophila melanogaster (Fruit fly) protein is Exosome complex component RRP40.